Reading from the N-terminus, the 964-residue chain is Pumilio homolog 3 (964 aa).

Residues 1 to 22 are disordered; the sequence is MMIPELGRRPMHRGNEDSSFGD. S192 carries the phosphoserine modification. 3 disordered regions span residues 204–235, 256–300, and 343–388; these read PVVQ…ASQG, GTPD…TSGL, and DGHN…VANP. Composition is skewed to polar residues over residues 207 to 216 and 223 to 234; these read QQPSRPASRN and DSNNNLSPSASQ. Phosphothreonine is present on T257. Polar residues-rich tracts occupy residues 287 to 300 and 356 to 384; these read TSNQ…TSGL and RSDQ…SGSG. Positions 606–946 constitute a PUM-HD domain; sequence FGSSMLEEFK…HIVARVEKLV (341 aa). 8 Pumilio repeats span residues 626 to 661, 662 to 697, 698 to 733, 734 to 769, 770 to 806, 807 to 842, 843 to 878, and 879 to 920; these read EIAG…MVYE, EIMP…ELGE, KLID…QMVK, ELDG…FIIS, TFFG…KVME, EILS…VIIK, ELAG…LLVN, and EMLG…LILT.

It is found in the cytoplasm. Its function is as follows. Sequence-specific RNA-binding protein that regulates translation and mRNA stability by binding the 3'-UTR of target mRNAs. Binds the APUM-binding elements (APBEs) in the 3'-UTR mRNA sequence of CLV1, PNH, WUS and FAS2. This is Pumilio homolog 3 (APUM3) from Arabidopsis thaliana (Mouse-ear cress).